The sequence spans 271 residues: 60 kDa heat shock protein, mitochondrial (271 aa).

Phosphoserine is present on residues S30 and S33. Residue 50–54 (DGTTT) coordinates ATP. K83 is modified (N6-acetyllysine). 3 positions are modified to N6-acetyllysine; alternate: K84, K97, and K112. An N6-succinyllysine; alternate mark is found at K84, K97, and K112. An N6-acetyllysine modification is found at K125. Residue K126 is modified to N6-acetyllysine; alternate. Position 126 is an N6-succinyllysine; alternate (K126). K145 carries the N6-acetyllysine modification. K175 bears the N6-succinyllysine mark. 2 positions are modified to N6-acetyllysine: K188 and K237. Position 257 (G257) interacts with ATP. The residue at position 270 (K270) is an N6-acetyllysine.

The protein belongs to the chaperonin (HSP60) family. Homoheptamer arranged in a ring structure. The functional units of these chaperonins consist of heptameric rings of the large subunit Hsp60, which function as a back-to-back double ring. Interacts with 2 heptameric Hsp10 rings to form the symmetrical football complex. Interacts with HRAS. Interacts with ATAD3A. Interacts with ETFBKMT and EEF1AKMT3. Interacts with MFHAS1. As to expression, detected at higher levels in caput epididymal spermatazoa than in cauda epididymal spermatazoa (at protein level).

The protein localises to the mitochondrion matrix. It carries out the reaction ATP + H2O + a folded polypeptide = ADP + phosphate + an unfolded polypeptide.. Its function is as follows. Chaperonin implicated in mitochondrial protein import and macromolecular assembly. Together with Hsp10, facilitates the correct folding of imported proteins. May also prevent misfolding and promote the refolding and proper assembly of unfolded polypeptides generated under stress conditions in the mitochondrial matrix. The functional units of these chaperonins consist of heptameric rings of the large subunit Hsp60, which function as a back-to-back double ring. In a cyclic reaction, Hsp60 ring complexes bind one unfolded substrate protein per ring, followed by the binding of ATP and association with 2 heptameric rings of the co-chaperonin Hsp10. This leads to sequestration of the substrate protein in the inner cavity of Hsp60 where, for a certain period of time, it can fold undisturbed by other cell components. Synchronous hydrolysis of ATP in all Hsp60 subunits results in the dissociation of the chaperonin rings and the release of ADP and the folded substrate protein. This chain is 60 kDa heat shock protein, mitochondrial, found in Mesocricetus auratus (Golden hamster).